Here is a 225-residue protein sequence, read N- to C-terminus: Ribonuclease 3 (225 aa).

One can recognise an RNase III domain in the interval Met7 to Gly132. Glu45 provides a ligand contact to Mg(2+). Asp49 is a catalytic residue. Positions 118 and 121 each coordinate Mg(2+). Residue Glu121 is part of the active site. Residues Asp157–Asp225 form the DRBM domain.

It belongs to the ribonuclease III family. In terms of assembly, homodimer. Mg(2+) is required as a cofactor.

It is found in the cytoplasm. It catalyses the reaction Endonucleolytic cleavage to 5'-phosphomonoester.. Its function is as follows. Digests double-stranded RNA. Involved in the processing of primary rRNA transcript to yield the immediate precursors to the large and small rRNAs (23S and 16S). Processes some mRNAs, and tRNAs when they are encoded in the rRNA operon. Processes pre-crRNA and tracrRNA of type II CRISPR loci if present in the organism. The protein is Ribonuclease 3 of Ruegeria pomeroyi (strain ATCC 700808 / DSM 15171 / DSS-3) (Silicibacter pomeroyi).